A 229-amino-acid polypeptide reads, in one-letter code: 2,3-bisphosphoglycerate-dependent phosphoglycerate mutase (229 aa).

Substrate-binding positions include 7–14 (RHGQSEWN), 20–21 (TG), arginine 59, 86–89 (ERHY), lysine 97, 113–114 (RR), and 182–183 (GN). Catalysis depends on histidine 8, which acts as the Tele-phosphohistidine intermediate. Residue glutamate 86 is the Proton donor/acceptor of the active site.

This sequence belongs to the phosphoglycerate mutase family. BPG-dependent PGAM subfamily.

It catalyses the reaction (2R)-2-phosphoglycerate = (2R)-3-phosphoglycerate. It participates in carbohydrate degradation; glycolysis; pyruvate from D-glyceraldehyde 3-phosphate: step 3/5. In terms of biological role, catalyzes the interconversion of 2-phosphoglycerate and 3-phosphoglycerate. The polypeptide is 2,3-bisphosphoglycerate-dependent phosphoglycerate mutase (Listeria monocytogenes serotype 4a (strain HCC23)).